A 213-amino-acid chain; its full sequence is MSTIVKICGLTTADTLEAAVEAGADMVGFVFFPASPRHLDIDFADALGRQVRSRAAKVALTVDADDDLLDAIVEQLRPNWLQFHGSESPERVRSIKRIYGLPVMKAIAVAGPDDLSVLPDYAAVADRILFDARPPKDATRPGGLGAAFDWKLLDGVNLKLPFLVSGGINAGNVAEALRVTRAQGVDVSSGVETSPGEKDPDLIRDFIRAARAA.

Belongs to the TrpF family.

The catalysed reaction is N-(5-phospho-beta-D-ribosyl)anthranilate = 1-(2-carboxyphenylamino)-1-deoxy-D-ribulose 5-phosphate. Its pathway is amino-acid biosynthesis; L-tryptophan biosynthesis; L-tryptophan from chorismate: step 3/5. This chain is N-(5'-phosphoribosyl)anthranilate isomerase, found in Rhodopseudomonas palustris (strain ATCC BAA-98 / CGA009).